We begin with the raw amino-acid sequence, 121 residues long: Large ribosomal subunit protein bL12 (121 aa).

Belongs to the bacterial ribosomal protein bL12 family. As to quaternary structure, homodimer. Part of the ribosomal stalk of the 50S ribosomal subunit. Forms a multimeric L10(L12)X complex, where L10 forms an elongated spine to which 2 to 4 L12 dimers bind in a sequential fashion. Binds GTP-bound translation factors.

Functionally, forms part of the ribosomal stalk which helps the ribosome interact with GTP-bound translation factors. Is thus essential for accurate translation. The polypeptide is Large ribosomal subunit protein bL12 (Acinetobacter baylyi (strain ATCC 33305 / BD413 / ADP1)).